A 1054-amino-acid chain; its full sequence is Trehalose synthase complex regulatory subunit TPS3 (1054 aa).

The interval 112 to 133 (AANSGIPPANNPVSSGSTAQRP) is disordered. A compositionally biased stretch (polar residues) spans 122–132 (NPVSSGSTAQR). A phosphoserine mark is found at Ser148, Ser150, and Ser181. Disordered regions lie at residues 155–203 (ASSI…PVSK) and 223–250 (QQQA…SSSN). Polar residues predominate over residues 170-182 (LSSSLMKNPNLSF). The span at 235–249 (SGSTAGDSSIASSSS) shows a compositional bias: low complexity. Thr265 carries the post-translational modification Phosphothreonine. Phosphoserine is present on residues Ser267 and Ser273. Residues 287 to 778 (KFGGYSNNAK…SNQETSTVFN (492 aa)) form a glycosyltransferase region. A Phosphoserine modification is found at Ser960.

This sequence in the N-terminal section; belongs to the glycosyltransferase 20 family. The trehalose synthase complex is composed of the two catalytic subunits TPS1 and TPS2 and at least one of the two regulatory subunits TPS3 or TSL1.

The protein resides in the cytoplasm. In terms of biological role, regulatory subunit of the trehalose synthase complex that catalyzes the production of trehalose from glucose-6-phosphate and UDP-glucose in a two step process. May stabilize the trehalose synthase complex. This Saccharomyces cerevisiae (strain ATCC 204508 / S288c) (Baker's yeast) protein is Trehalose synthase complex regulatory subunit TPS3 (TPS3).